The following is a 330-amino-acid chain: Reaction center protein M chain (330 aa).

Transmembrane regions (helical) follow at residues 57–83, 115–144, and 147–172; these read GWTS…AQVG, GGWY…EQHK, and KHIF…ILMG. 2 residues coordinate (7R,8Z)-bacteriochlorophyll b: histidine 185 and histidine 205. Residues 202 to 230 traverse the membrane as a helical segment; the sequence is NPFHCLSIVFLYGSVLLFCMHGGTILAVT. Fe cation is bound by residues histidine 222 and glutamate 237. Tryptophan 255 is a binding site for a ubiquinone. The helical transmembrane segment at 264–290 threads the bilayer; that stretch reads TMEGIHRWAWWFAVLTPITGGIGILLT. Histidine 269 is a binding site for Fe cation.

The protein belongs to the reaction center PufL/M/PsbA/D family. As to quaternary structure, reaction center is composed of four bacteriochlorophylls, two bacteriopheophytins, two ubiquinones, one iron, and two highly hydrophobic polypeptide chains (designated L and M).

The protein resides in the cellular chromatophore membrane. The reaction center is a membrane-bound complex that mediates the initial photochemical event in the electron transfer process of photosynthesis. This Roseobacter denitrificans (strain ATCC 33942 / OCh 114) (Erythrobacter sp. (strain OCh 114)) protein is Reaction center protein M chain (pufM).